The primary structure comprises 50 residues: Omwaprin-a (50 aa).

The WAP domain maps to 3–47; the sequence is RPKKPGLCPPRPQKPCVKECKNDDSCPGQQKCCNYGCKDECRDPI. Intrachain disulfides connect C10–C35, C18–C39, C22–C34, and C28–C43.

It belongs to the venom waprin family. As to expression, expressed by the venom gland.

Its subcellular location is the secreted. Functionally, damages membranes of susceptible bacteria. Has antibacterial activity against the Gram-positive bacteria B.megaterium and S.warneri. After a 45-minute treatment with this protein, B.megaterium have no visible pili and are smooth. Has no antibacterial activity against the Gram-positive bacteria B.thuringiensis, S.aureus, S.clavuligerus and B.anthracis, or the Gram-negative bacteria E.coli and A.tumefaciens. Has no hemolytic activity. Does not inhibit the proteinases elastase and cathepsin G. Is not toxic to mice. The protein is Omwaprin-a of Oxyuranus microlepidotus (Inland taipan).